The sequence spans 637 residues: Epithelial sodium channel subunit alpha (637 aa).

Positions 1 to 34 are disordered; sequence MGTASRGGSVKAEKMPEGEKTRQCKQETEQQQKE. The Cytoplasmic segment spans residues 1–76; sequence MGTASRGGSV…VCSKKNKMKT (76 aa). The span at 11–34 shows a compositional bias: basic and acidic residues; the sequence is KAEKMPEGEKTRQCKQETEQQQKE. Residues 77-97 form a helical membrane-spanning segment; sequence AFWSVLFILTFGLMYWQFGIL. Residues 98–548 lie on the Extracellular side of the membrane; that stretch reads YREYFSYPVN…NQWSLWFGSS (451 aa). 10 disulfides stabilise this stretch: cysteine 125/cysteine 292, cysteine 217/cysteine 224, cysteine 269/cysteine 276, cysteine 380/cysteine 465, cysteine 402/cysteine 442, cysteine 402/cysteine 461, cysteine 406/cysteine 457, cysteine 415/cysteine 442, cysteine 415/cysteine 465, and cysteine 417/cysteine 431. The helical transmembrane segment at 549–569 threads the bilayer; sequence VLSVMELAELILDFTVITFIL. Over 570-637 the chain is Cytoplasmic; that stretch reads AFRWFRSKQW…PSKDGETGLE (68 aa).

This sequence belongs to the amiloride-sensitive sodium channel (TC 1.A.6) family. SCNN1A subfamily. Heterotrimer; containing an alpha/SCNN1A, a beta/SCNN1B and a gamma/SCNN1G subunit. As to expression, the long isoform has been found in cochlea, colon, and cartilage. The short isoform is only found in cochlea.

It localises to the apical cell membrane. It is found in the cell projection. The protein localises to the cilium. Its subcellular location is the cytoplasmic granule. The protein resides in the cytoplasm. It localises to the cytoplasmic vesicle. It is found in the secretory vesicle. The protein localises to the acrosome. Its subcellular location is the flagellum. The catalysed reaction is Na(+)(in) = Na(+)(out). Originally identified and characterized by its inhibition by the diuretic drug amiloride. This is one of the three pore-forming subunits of the heterotrimeric epithelial sodium channel (ENaC), a critical regulator of sodium balance and fluid homeostasis. ENaC operates in epithelial tissues, where it mediates the electrodiffusion of sodium ions from extracellular fluid through the apical membrane of cells, with water following osmotically. This chain is Epithelial sodium channel subunit alpha, found in Gallus gallus (Chicken).